We begin with the raw amino-acid sequence, 395 residues long: ETS-related transcription factor Elf-3 (395 aa).

A PNT domain is found at Glu-69–Ser-155. Positions Ala-200–Asp-240 are enriched in low complexity. The interval Ala-200–Arg-275 is disordered. Positions Thr-246–Lys-265 are enriched in basic and acidic residues. Positions His-266 to Arg-275 are enriched in basic residues. Positions Thr-297 to Gly-379 form a DNA-binding region, ETS.

This sequence belongs to the ETS family. In terms of assembly, interacts with TBP. Interacts with CREBBP and EP300; these act as transcriptional coactivators of ELF3 and positively modulate its function. Interacts with XRCC5/KU86 and XRCC6/KU70; these inhibit the ability of ELF3 to bind DNA and negatively modulate its transcriptional activity. Associated with CLND7 and POU2F3. Interacts with ZNF768.

The protein resides in the cytoplasm. It localises to the nucleus. In terms of biological role, transcriptional activator that binds and transactivates ETS sequences containing the consensus nucleotide core sequence GGA[AT]. Acts synergistically with POU2F3 to transactivate the SPRR2A promoter and with RUNX1 to transactivate the ANGPT1 promoter. Also transactivates collagenase, CCL20, CLND7, FLG, KRT8, NOS2, PTGS2, SPRR2B, TGFBR2 and TGM3 promoters. Represses KRT4 promoter activity. Involved in mediating vascular inflammation. May play an important role in epithelial cell differentiation and tumorigenesis. May be a critical downstream effector of the ERBB2 signaling pathway. May be associated with mammary gland development and involution. Plays an important role in the regulation of transcription with TATA-less promoters in preimplantation embryos, which is essential in preimplantation development. The protein is ETS-related transcription factor Elf-3 of Rattus norvegicus (Rat).